The sequence spans 359 residues: 5-amino-6-(D-ribitylamino)uracil--L-tyrosine 4-hydroxyphenyl transferase (359 aa).

A Radical SAM core domain is found at 45 to 282; it reads VTYVVNANIN…TYAVSRIFFK (238 aa). Positions 59, 63, and 66 each coordinate [4Fe-4S] cluster.

Belongs to the radical SAM superfamily. CofH family. As to quaternary structure, consists of two subunits, CofG and CofH. Requires [4Fe-4S] cluster as cofactor.

The catalysed reaction is 5-amino-6-(D-ribitylamino)uracil + L-tyrosine + S-adenosyl-L-methionine = 5-amino-5-(4-hydroxybenzyl)-6-(D-ribitylimino)-5,6-dihydrouracil + 2-iminoacetate + 5'-deoxyadenosine + L-methionine + H(+). Its pathway is cofactor biosynthesis; coenzyme F0 biosynthesis. Catalyzes the radical-mediated synthesis of 5-amino-5-(4-hydroxybenzyl)-6-(D-ribitylimino)-5,6-dihydrouracil from 5-amino-6-(D-ribitylamino)uracil and L-tyrosine. This is 5-amino-6-(D-ribitylamino)uracil--L-tyrosine 4-hydroxyphenyl transferase from Methanococcus maripaludis (strain C6 / ATCC BAA-1332).